A 180-amino-acid chain; its full sequence is Large ribosomal subunit protein uL6 (180 aa).

It belongs to the universal ribosomal protein uL6 family. In terms of assembly, part of the 50S ribosomal subunit.

Its function is as follows. This protein binds to the 23S rRNA, and is important in its secondary structure. It is located near the subunit interface in the base of the L7/L12 stalk, and near the tRNA binding site of the peptidyltransferase center. This is Large ribosomal subunit protein uL6 from Clostridium botulinum (strain Loch Maree / Type A3).